Consider the following 154-residue polypeptide: MPTTLAVVRLDRDLPLPSRAHDGDAGVDLYSAQDVELAPGQRALVPTGIAVAIPHGMVGLIHPRSGLAARVGLSIVNSPGTVDAGYRGEIKVSLINLDPAAPIAIRRGDRIAQLLVQRVELPELVEVTSFDEAGLADTTRGDGGHGSSGGHASL.

Substrate-binding positions include 64 to 66 (RSG), Asn-77, 81 to 83 (TVD), and Lys-91. The interval 135-154 (LADTTRGDGGHGSSGGHASL) is disordered. Positions 144–154 (GHGSSGGHASL) are enriched in gly residues.

This sequence belongs to the dUTPase family. Homotrimer. Mg(2+) is required as a cofactor.

The catalysed reaction is dUTP + H2O = dUMP + diphosphate + H(+). Its pathway is pyrimidine metabolism; dUMP biosynthesis; dUMP from dCTP (dUTP route): step 2/2. Functionally, this enzyme is involved in nucleotide metabolism: it produces dUMP, the immediate precursor of thymidine nucleotides and it decreases the intracellular concentration of dUTP so that uracil cannot be incorporated into DNA. In Mycolicibacterium vanbaalenii (strain DSM 7251 / JCM 13017 / BCRC 16820 / KCTC 9966 / NRRL B-24157 / PYR-1) (Mycobacterium vanbaalenii), this protein is Deoxyuridine 5'-triphosphate nucleotidohydrolase.